The following is a 430-amino-acid chain: D-galactonate transporter (430 aa).

At 1–17 the chain is on the cytoplasmic side; sequence MDIPVNAAKPGRRRYLT. Residues 18–39 form a helical membrane-spanning segment; sequence LVMIFITVVICYVDRANLAVAS. D-galactonate contacts are provided by Tyr-29 and Arg-32. Residues 40 to 50 are Periplasmic-facing; it reads AHIQEEFGITK. The chain crosses the membrane as a helical span at residues 51–74; it reads AEMGYVFSAFAWLYTLCQIPGGWF. Tyr-64 contacts D-galactonate. Residues 75–81 lie on the Cytoplasmic side of the membrane; it reads LDRVGSR. A helical transmembrane segment spans residues 82–100; sequence VTYFIAIFGWSVATLFQGF. Over 101–103 the chain is Periplasmic; the sequence is ATG. A helical transmembrane segment spans residues 104–125; the sequence is LMSLIGLRAITGIFEAPAFPTN. Residues 126-141 lie on the Cytoplasmic side of the membrane; sequence NRMVTSWFPEHERASA. A helical membrane pass occupies residues 142-164; the sequence is VGFYTSGQFVGLAFLTPLLIWIQ. At 165–168 the chain is on the periplasmic side; sequence EMLS. The chain crosses the membrane as a helical span at residues 169–190; it reads WHWVFIVTGGIGIIWSLIWFKV. Topologically, residues 191-241 are cytoplasmic; sequence YQPPRLTKGISKAELDYIRDGGGLVDGDAPVKKEARQPLTAKDWKLVFHRK. Residues 242–267 traverse the membrane as a helical segment; it reads LIGVYLGQFAVASTLWFFLTWFPNYL. At 268–276 the chain is on the periplasmic side; that stretch reads TQEKGITAL. A helical transmembrane segment spans residues 277-297; the sequence is KAGFMTTVPFLAAFVGVLLSG. Residues 298–314 are Cytoplasmic-facing; the sequence is WVADLLVRKGFSLGFAR. A helical transmembrane segment spans residues 315–333; that stretch reads KTPIICGLLISTCIMGANY. Topologically, residues 334-336 are periplasmic; sequence TND. The helical transmembrane segment at 337-354 threads the bilayer; sequence PMMIMCLMALAFFGNGFA. The Cytoplasmic portion of the chain corresponds to 355-373; the sequence is SITWSLVSSLAPMRLIGLT. Trp-358 lines the D-galactonate pocket. A helical transmembrane segment spans residues 374 to 395; sequence GGVFNFAGGLGGITVPLVVGYL. Over 396-400 the chain is Periplasmic; that stretch reads AQGYG. A helical membrane pass occupies residues 401-423; that stretch reads FAPALVYISAVALIGALSYILLV. Over 424-430 the chain is Cytoplasmic; the sequence is GDVKRVG.

The protein belongs to the major facilitator superfamily. Phthalate permease family.

It localises to the cell inner membrane. The catalysed reaction is D-galactonate(in) + H(+)(in) = D-galactonate(out) + H(+)(out). Its function is as follows. Involved in D-galactonate metabolism. Catalyzes the proton-dependent uptake of galactonate into the cell. The protein is D-galactonate transporter (dgoT) of Escherichia coli O6:H1 (strain CFT073 / ATCC 700928 / UPEC).